Here is a 556-residue protein sequence, read N- to C-terminus: Formate--tetrahydrofolate ligase (556 aa).

Residue 65–72 (TPAGEGKS) participates in ATP binding.

Belongs to the formate--tetrahydrofolate ligase family.

It catalyses the reaction (6S)-5,6,7,8-tetrahydrofolate + formate + ATP = (6R)-10-formyltetrahydrofolate + ADP + phosphate. Its pathway is one-carbon metabolism; tetrahydrofolate interconversion. The chain is Formate--tetrahydrofolate ligase from Streptococcus thermophilus (strain ATCC BAA-491 / LMD-9).